We begin with the raw amino-acid sequence, 525 residues long: Histidine-rich glycoprotein (525 aa).

A signal peptide spans 1 to 18 (MKALIAALLLITLQYSCA). 2 consecutive Cystatin domains span residues 19–136 (VSPT…SALA) and 137–254 (NTKD…NING). 5 disulfides stabilise this stretch: C24–C504, C78–C89, C105–C126, C203–C417, and C218–C241. Residues 41–84 (RRRDGYLFQLLRIADAHLDRVENTTVYYLVLDVQESDCSVLSRK) are interaction with ATP5F1A. N63 carries N-linked (GlcNAc...) asparagine glycosylation. Residue N125 is glycosylated (N-linked (GlcNAc...) asparagine). Residues 252–407 (INGVPPHLGH…GHHPHGHHPH (156 aa)) are disordered. Basic residues predominate over residues 284–293 (RDHHHPHKPH). Pro residues predominate over residues 310–320 (PPLPQGPPPLL). Residues 323-348 (SCSSCQHATFGTNGAQRHSHNNNSSD) are compositionally biased toward polar residues. N344 and N345 each carry an N-linked (GlcNAc...) asparagine glycan. The interval 348–382 (DLHPHKHHSHEQHPHGHHPHAHHPHEHDTHRQHPH) is necessary for endothelial cell focal adhesions and anti-angiogenic activities. 2 stretches are compositionally biased toward basic residues: residues 351–371 (PHKH…AHHP) and 379–407 (QHPH…HHPH).

As to quaternary structure, interacts (via the HRR domain) with TPM1; the interaction appears to contribute to the antiangiogenic properties of the HRR domain. Interacts with THBS2; the interaction blocks the antiangiogenic effect of THBS2 with CD36. Interacts with THBS1 (via the TSP type I repeats); the interaction blocks the antiangiogenic effect of THBS1 with CD3. Interacts with PLG (via its Kringle domains); the interaction tethers PLG to the cell surface and enhances its activation. Interacts with HPSE; the interaction is enhanced at acidic pH, partially inhibits binding of HPSE to cell surface receptors and modulates its enzymatic activity. Interacts (via the HRR domain) with TMP1; the interaction partially mediates the antiangiogenic properties of HRG. Interacts with kappa and lambda light chains of IgG molecules. Interacts with ATP5F1A; the interaction occurs on the surface of T-cells and alters their cell morphology in concert with CONA. Binds IgG molecules containing kappa and lambda light chains and inhibits the formation of insoluble immunoglobulin complexes. Interacts with F12; the interaction, which is enhanced in the presence of zinc ions and inhibited by heparin-binding to HRG, inhibits factor XII autoactivation and contact-initiated coagulation. Zn(2+) is required as a cofactor. In terms of processing, proteolytic cleavage produces several HRG fragments which are mostly disulfide-linked and, therefore, not released. Cleavage by plasmin is inhibited in the presence of heparin, zinc ions or in an acidic environment. Cleavage reduces binding of HRG to heparan sulfate, but enhances the ability of HRG to bind and tether plasminogen to the cell surface. On platelet activation, releases a 33 kDa antiangiogenic peptide which encompasses the HRR. Also cleaved in the C-terminal by plasmin. N-glycosylated. In terms of tissue distribution, expressed in macrophages and in malignant cells. Expressed by the liver and secreted in plasma (at protein level).

It is found in the secreted. Its function is as follows. Plasma glycoprotein that binds a number of ligands such as heme, heparin, heparan sulfate, thrombospondin, plasminogen, and divalent metal ions. Binds heparin and heparin/glycosaminoglycans in a zinc-dependent manner. Binds heparan sulfate on the surface of liver, lung, kidney and heart endothelial cells. Binds to N-sulfated polysaccharide chains on the surface of liver endothelial cells. Inhibits rosette formation. Acts as an adapter protein and is implicated in regulating many processes such as immune complex and pathogen clearance, cell chemotaxis, cell adhesion, angiogenesis, coagulation and fibrinolysis. Mediates clearance of necrotic cells through enhancing the phagocytosis of necrotic cells in a heparan sulfate-dependent pathway. This process can be regulated by the presence of certain HRG ligands such as heparin and zinc ions. Binds to IgG subclasses of immunoglobins containing kappa and lambda light chains with different affinities regulating their clearance and inhibiting the formation of insoluble immune complexes. Tethers plasminogen to the cell surface. Binds T-cells and alters the cell morphology. Modulates angiogenesis by blocking the CD6-mediated antiangiongenic effect of thrombospondins, THBS1 and THBS2. Acts as a regulator of the vascular endothelial growth factor (VEGF) signaling pathway; inhibits endothelial cell motility by reducing VEGF-induced complex formation between PXN/paxillin and ILK/integrin-linked protein kinase and by promoting inhibition of VEGF-induced tyrosine phosphorylation of focal adhesion kinases and alpha-actinins in endothelial cells. Also plays a role in the regulation of tumor angiogenesis and tumor immune surveillance. Normalizes tumor vessels and promotes antitumor immunity by polarizing tumor-associated macrophages, leading to decreased tumor growth and metastasis. The chain is Histidine-rich glycoprotein (HRG) from Homo sapiens (Human).